The chain runs to 222 residues: 7-cyano-7-deazaguanine synthase (222 aa).

Leu11–Leu21 provides a ligand contact to ATP. Zn(2+) is bound by residues Cys192, Cys200, Cys203, and Cys206.

Belongs to the QueC family. Zn(2+) serves as cofactor.

It catalyses the reaction 7-carboxy-7-deazaguanine + NH4(+) + ATP = 7-cyano-7-deazaguanine + ADP + phosphate + H2O + H(+). It participates in purine metabolism; 7-cyano-7-deazaguanine biosynthesis. In terms of biological role, catalyzes the ATP-dependent conversion of 7-carboxy-7-deazaguanine (CDG) to 7-cyano-7-deazaguanine (preQ(0)). This Sulfurihydrogenibium sp. (strain YO3AOP1) protein is 7-cyano-7-deazaguanine synthase.